The primary structure comprises 723 residues: MCSPASSKILYRNPRFLRVAFLQLHHQQQSGVFCDALLQAEGEAVPAHCCILSACSPFFTERLERERPVQGRKVVLEMGGLKIQTLRKLVDFLYTSEMEVSQEEAQDVLSAARQLRVSELETLQLEGGKLVKAPQGRRLNRECLQPPAAAPISARVVGPKSRPQTPLPVTQTPSPLGAVRLKSLGEEEGAHKKTNLPNADSLSDTQLKKKARVCLTQESRSSPSSQREGPKETKSNPGPTALPSLYPSVDEQLLPRKIRLSRSKPSPHVYTSTPSSILSGPSSMPTAPGRRLWRQRTVSKEAQGVDKQKPGEVRPLQSTPDPSDVGKPAENKKQSPELRAPTSSSVEEGQVGRVKLRKIVNGTCWEVVQEPPLRNTQDSPQILEPSDVEEPSGTLLSSVNEQEIPARIQLCQDSPESPRLQDILLSASHSPDHPMVKSEFGSSPMLTGKESDLNIDCREPYTFDTTLLGQPCEAEQYRITSAAATSELEEIFDFMLCGSDVEPPVGSLESPGAEGCRTPSYHLSETGKNWIEGEEWCLPDMELWPRDLTGLEKEPVSENKEPVEPFSPLVMRSENTESFEPLSPLVMPSEVSREELSLRGSWTPDLEITSSQPLDGQGEKLLHFDSSDPSQRSYNHLSPPCSDWAETGLEVSLGMDDVLCPVPKAVREVSANPEQLDPLPGSSEDEEIDVVDWTVEKKLGPTSVPSVWPDPSSESETEVDILT.

In terms of domain architecture, BTB spans 34–102 (CDALLQAEGE…LYTSEMEVSQ (69 aa)). Disordered stretches follow at residues 150–176 (APISARVVGPKSRPQTPLPVTQTPSPL), 188–350 (EGAH…EEGQ), and 370–394 (EPPLRNTQDSPQILEPSDVEEPSGT). Composition is skewed to polar residues over residues 162 to 174 (RPQTPLPVTQTPS) and 195 to 205 (NLPNADSLSDT). Composition is skewed to low complexity over residues 217–227 (QESRSSPSSQR) and 271–286 (TSTPSSILSGPSSMPT). Composition is skewed to basic and acidic residues over residues 303–312 (QGVDKQKPGE) and 327–336 (KPAENKKQSP). Residue serine 414 is modified to Phosphoserine. The interval 603–637 (TPDLEITSSQPLDGQGEKLLHFDSSDPSQRSYNHL) is disordered. Residues 617 to 626 (QGEKLLHFDS) are compositionally biased toward basic and acidic residues. Polar residues predominate over residues 627 to 636 (SDPSQRSYNH). Serine 682 and serine 683 each carry phosphoserine. Residues 699–723 (LGPTSVPSVWPDPSSESETEVDILT) form a disordered region. Acidic residues predominate over residues 713–723 (SESETEVDILT).

As to expression, expressed in testis.

The protein localises to the nucleus. Specifically required during spermatogenesis to promote expression of piRNA precursors. The piRNA metabolic process mediates the repression of transposable elements during meiosis by forming complexes composed of piRNAs and Piwi proteins and governs the methylation and subsequent repression of transposons, which is essential for the germline integrity. Acts by facilitating transcription elongation at piRNA loci during pachytene. This Mus musculus (Mouse) protein is BTB/POZ domain-containing protein 18.